A 43-amino-acid chain; its full sequence is Cytochrome b559 subunit beta (43 aa).

Residues 18 to 34 (WLAIHGLAIPTVFFLGG) form a helical membrane-spanning segment. Position 22 (H22) interacts with heme.

It belongs to the PsbE/PsbF family. As to quaternary structure, heterodimer of an alpha subunit and a beta subunit. PSII is composed of 1 copy each of membrane proteins PsbA, PsbB, PsbC, PsbD, PsbE, PsbF, PsbH, PsbI, PsbJ, PsbK, PsbL, PsbM, PsbT, PsbX, PsbY, PsbZ, Psb30/Ycf12, at least 3 peripheral proteins of the oxygen-evolving complex and a large number of cofactors. It forms dimeric complexes. Heme b is required as a cofactor.

The protein resides in the plastid. The protein localises to the chloroplast thylakoid membrane. Its function is as follows. This b-type cytochrome is tightly associated with the reaction center of photosystem II (PSII). PSII is a light-driven water:plastoquinone oxidoreductase that uses light energy to abstract electrons from H(2)O, generating O(2) and a proton gradient subsequently used for ATP formation. It consists of a core antenna complex that captures photons, and an electron transfer chain that converts photonic excitation into a charge separation. In Phaeodactylum tricornutum (strain CCAP 1055/1), this protein is Cytochrome b559 subunit beta.